Consider the following 226-residue polypeptide: Ribonuclease HII (226 aa).

One can recognise an RNase H type-2 domain in the interval 29 to 220; that stretch reads GPVAGVDEAG…VAALLHRVDN (192 aa). Aspartate 35, glutamate 36, and aspartate 129 together coordinate a divalent metal cation.

The protein belongs to the RNase HII family. The cofactor is Mn(2+). Requires Mg(2+) as cofactor.

It localises to the cytoplasm. It carries out the reaction Endonucleolytic cleavage to 5'-phosphomonoester.. In terms of biological role, endonuclease that specifically degrades the RNA of RNA-DNA hybrids. This Rhodococcus opacus (strain B4) protein is Ribonuclease HII.